Consider the following 131-residue polypeptide: Profilin-6 (131 aa).

A disulfide bridge links C13 with C115. Residues 81–97 (VVIRGKKGAGGITIKKT) carry the Involved in PIP2 interaction motif. Phosphothreonine is present on T111.

This sequence belongs to the profilin family. As to quaternary structure, occurs in many kinds of cells as a complex with monomeric actin in a 1:1 ratio. Phosphorylated by MAP kinases.

The protein localises to the cytoplasm. The protein resides in the cytoskeleton. Its function is as follows. Binds to actin and affects the structure of the cytoskeleton. At high concentrations, profilin prevents the polymerization of actin, whereas it enhances it at low concentrations. The sequence is that of Profilin-6 from Corylus avellana (European hazel).